A 119-amino-acid chain; its full sequence is Large ribosomal subunit protein bL20 (119 aa).

It belongs to the bacterial ribosomal protein bL20 family.

Its function is as follows. Binds directly to 23S ribosomal RNA and is necessary for the in vitro assembly process of the 50S ribosomal subunit. It is not involved in the protein synthesizing functions of that subunit. The chain is Large ribosomal subunit protein bL20 from Streptococcus uberis (strain ATCC BAA-854 / 0140J).